Reading from the N-terminus, the 257-residue chain is Nickel import system ATP-binding protein NikD (257 aa).

Residues isoleucine 4–isoleucine 245 enclose the ABC transporter domain. Glycine 37–serine 44 contributes to the ATP binding site.

Belongs to the ABC transporter superfamily. In terms of assembly, the complex is composed of two ATP-binding proteins (NikD and NikE), two transmembrane proteins (NikB and NikC) and a solute-binding protein (NikA).

The protein resides in the cell membrane. It carries out the reaction Ni(2+)(out) + ATP + H2O = Ni(2+)(in) + ADP + phosphate + H(+). Part of the ABC transporter complex NikABCDE (Opp2) involved in nickel import. Probably responsible for energy coupling to the transport system. This Staphylococcus aureus (strain bovine RF122 / ET3-1) protein is Nickel import system ATP-binding protein NikD.